Reading from the N-terminus, the 196-residue chain is Phosphoheptose isomerase (196 aa).

The region spanning 34–193 is the SIS domain; the sequence is LIETFKIGNK…EQGLFGIFAG (160 aa). 49–51 lines the substrate pocket; it reads NGG. Zn(2+) contacts are provided by histidine 58 and glutamate 62. Substrate is bound by residues glutamate 62, 91 to 92, 117 to 119, serine 122, and glutamine 169; these read ND and STS. Positions 169 and 177 each coordinate Zn(2+).

This sequence belongs to the SIS family. GmhA subfamily. As to quaternary structure, homotetramer. Requires Zn(2+) as cofactor.

It localises to the cytoplasm. The catalysed reaction is 2 D-sedoheptulose 7-phosphate = D-glycero-alpha-D-manno-heptose 7-phosphate + D-glycero-beta-D-manno-heptose 7-phosphate. Its pathway is carbohydrate biosynthesis; D-glycero-D-manno-heptose 7-phosphate biosynthesis; D-glycero-alpha-D-manno-heptose 7-phosphate and D-glycero-beta-D-manno-heptose 7-phosphate from sedoheptulose 7-phosphate: step 1/1. Functionally, catalyzes the isomerization of sedoheptulose 7-phosphate in D-glycero-D-manno-heptose 7-phosphate. The sequence is that of Phosphoheptose isomerase from Trichlorobacter lovleyi (strain ATCC BAA-1151 / DSM 17278 / SZ) (Geobacter lovleyi).